Consider the following 844-residue polypeptide: Beta-mannosidase B (844 aa).

The active-site Proton donor is the Glu-432. N-linked (GlcNAc...) asparagine glycosylation occurs at Asn-723.

Belongs to the glycosyl hydrolase 2 family. Beta-mannosidase B subfamily.

The enzyme catalyses Hydrolysis of terminal, non-reducing beta-D-mannose residues in beta-D-mannosides.. It functions in the pathway glycan metabolism; N-glycan degradation. In terms of biological role, exoglycosidase that cleaves the single beta-linked mannose residue from the non-reducing end of beta-mannosidic oligosaccharides of various complexity and length. Prefers mannobiose over mannotriose and has no activity against polymeric mannan. Is also severely restricted by galactosyl substitutions at the +1 subsite. This Aspergillus flavus (strain ATCC 200026 / FGSC A1120 / IAM 13836 / NRRL 3357 / JCM 12722 / SRRC 167) protein is Beta-mannosidase B (mndB).